The following is a 273-amino-acid chain: Signal recognition particle subunit SEC65 (273 aa).

The disordered stretch occupies residues 25–71 (PSLRTPIAPKITPKVVRSQDQENPAFLPGTNNNSNSNNNSSNEKEQL). Residues 55 to 65 (NNNSNSNNNSS) show a composition bias toward low complexity.

As to quaternary structure, fungal signal recognition particle (SRP) complex consists of a 7S RNA molecule (scR1) and at least six protein subunits: SRP72, SRP68, SRP54, SEC65, SRP21 and SRP14.

The protein resides in the cytoplasm. In terms of biological role, signal-recognition-particle (SRP) assembly has a crucial role in targeting secretory proteins to the rough endoplasmic reticulum (ER) membrane. SRP is required for the cotranslational protein translocation for ER import and preferentially recognizes strongly hydrophobic signal sequences. It is involved in targeting the nascent chain-ribosome (RNC) complex to the ER and is proposed to participate in the arrest of nascent chain elongation during membrane targeting. SEC65 is required for SRP integrity. The sequence is that of Signal recognition particle subunit SEC65 (SEC65) from Saccharomyces cerevisiae (strain ATCC 204508 / S288c) (Baker's yeast).